A 59-amino-acid polypeptide reads, in one-letter code: Large ribosomal subunit protein uL30 (59 aa).

It belongs to the universal ribosomal protein uL30 family. In terms of assembly, part of the 50S ribosomal subunit.

The chain is Large ribosomal subunit protein uL30 from Erwinia tasmaniensis (strain DSM 17950 / CFBP 7177 / CIP 109463 / NCPPB 4357 / Et1/99).